Reading from the N-terminus, the 106-residue chain is Vacuolar ATPase assembly integral membrane protein VMA21 homolog (106 aa).

A disordered region spans residues 1 to 26; that stretch reads MSNKNKKSGGAGNGAAQKQTRQQSHD. The Cytoplasmic segment spans residues 1–32; that stretch reads MSNKNKKSGGAGNGAAQKQTRQQSHDSQDYSS. A helical transmembrane segment spans residues 33–53; the sequence is FKIVLFYCMLIVFLPVVTFFL. The Lumenal segment spans residues 54–69; sequence LKGFVLDRFFSLSEVK. A helical membrane pass occupies residues 70 to 90; that stretch reads VNIASAVGAVVSLHIALGLYI. The Cytoplasmic segment spans residues 91–106; sequence YRAYFGATGSKAVKED.

It belongs to the VMA21 family.

The protein resides in the endoplasmic reticulum membrane. The protein localises to the endoplasmic reticulum-Golgi intermediate compartment membrane. It localises to the cytoplasmic vesicle. Its subcellular location is the COPII-coated vesicle membrane. Functionally, required for the assembly of the V0 complex of the vacuolar ATPase (V-ATPase) in the endoplasmic reticulum. This is Vacuolar ATPase assembly integral membrane protein VMA21 homolog from Drosophila ananassae (Fruit fly).